The primary structure comprises 219 residues: Small ribosomal subunit protein uS5 (219 aa).

Residues 1 to 32 (MSHPQSRPGGRDGRPRRRREPREEAPWVPKTA) are disordered. Residues 68–131 (LKTEVVDVGI…NQALLNVGPI (64 aa)) enclose the S5 DRBM domain.

Belongs to the universal ribosomal protein uS5 family. Part of the 30S ribosomal subunit. Contacts protein S4.

Functionally, with S4 and S12 plays an important role in translational accuracy. This Cenarchaeum symbiosum (strain A) protein is Small ribosomal subunit protein uS5 (rps5).